The sequence spans 313 residues: Protein-methionine-sulfoxide reductase catalytic subunit MsrP (313 aa).

The segment at residues Met-1–Ala-46 is a signal peptide (tat-type signal). Mo-molybdopterin is bound by residues Asn-70, Tyr-73 to Glu-74, Cys-127, Thr-162, Asn-212, Arg-217, and Gly-228 to Lys-230.

It belongs to the MsrP family. As to quaternary structure, heterodimer of a catalytic subunit (MsrP) and a heme-binding subunit (MsrQ). Mo-molybdopterin is required as a cofactor. In terms of processing, predicted to be exported by the Tat system. The position of the signal peptide cleavage has not been experimentally proven.

It localises to the periplasm. It catalyses the reaction L-methionyl-[protein] + a quinone + H2O = L-methionyl-(S)-S-oxide-[protein] + a quinol. The enzyme catalyses L-methionyl-[protein] + a quinone + H2O = L-methionyl-(R)-S-oxide-[protein] + a quinol. Part of the MsrPQ system that repairs oxidized periplasmic proteins containing methionine sulfoxide residues (Met-O), using respiratory chain electrons. Thus protects these proteins from oxidative-stress damage caused by reactive species of oxygen and chlorine generated by the host defense mechanisms. MsrPQ is essential for the maintenance of envelope integrity under bleach stress, rescuing a wide series of structurally unrelated periplasmic proteins from methionine oxidation. The catalytic subunit MsrP is non-stereospecific, being able to reduce both (R-) and (S-) diastereoisomers of methionine sulfoxide. The chain is Protein-methionine-sulfoxide reductase catalytic subunit MsrP from Rhizobium meliloti (strain 1021) (Ensifer meliloti).